The following is a 217-amino-acid chain: MOB kinase activator 3A (217 aa).

The Zn(2+) site is built by C83, C88, H165, and H170.

This sequence belongs to the MOB1/phocein family.

Its function is as follows. May regulate the activity of kinases. The polypeptide is MOB kinase activator 3A (MOB3A) (Homo sapiens (Human)).